We begin with the raw amino-acid sequence, 274 residues long: uncharacterized protein (274 aa).

This is an uncharacterized protein from Caenorhabditis elegans.